Reading from the N-terminus, the 676-residue chain is Double-stranded RNA-specific editase Adar (676 aa).

Residues 1 to 51 (MKFDSRVMLNSANNNSPQHPVSAPSDINMNGYNRKLPQKRGYEMPKYSDPK) are disordered. Residues 8–31 (MLNSANNNSPQHPVSAPSDINMNG) are compositionally biased toward polar residues. Basic and acidic residues predominate over residues 40–51 (RGYEMPKYSDPK). DRBM domains are found at residues 61-127 (QPKN…SFIQ) and 197-272 (ITVD…SLCN). The region spanning 348-672 (SVSTGTKCVS…LKKPIEQDEF (325 aa)) is the A to I editase domain. His-372 provides a ligand contact to Zn(2+). Residue Glu-374 is the Proton donor of the active site. 2 residues coordinate Zn(2+): Cys-430 and Cys-493.

As to expression, expressed in embryonic nervous system; late stage 13 sees ventral nerve cord expression which spreads to brain by stage 16. Expression is maintained through to adulthood.

Its function is as follows. Has A-to-I RNA editing activity on extended dsRNA: edits RNA-binding protein Rnp4F. A-to-I editing of pre-mRNAs acts predominantly through nervous system targets to affect adult nervous system integrity, function and behavior. Essential for adaptation to environmental stresses, such as oxygen deprivation, and for the prevention of premature neuronal degeneration, through the editing of ion channels as targets. The chain is Double-stranded RNA-specific editase Adar from Drosophila melanogaster (Fruit fly).